The chain runs to 246 residues: ATP synthase subunit a, chloroplastic (246 aa).

The next 5 helical transmembrane spans lie at 35–55 (AQVL…TFLA), 94–114 (IPFI…GALI), 132–152 (DINT…YAGL), 198–218 (LVVA…MMFL), and 219–239 (GLFT…AYIG).

Belongs to the ATPase A chain family. F-type ATPases have 2 components, CF(1) - the catalytic core - and CF(0) - the membrane proton channel. CF(1) has five subunits: alpha(3), beta(3), gamma(1), delta(1), epsilon(1). CF(0) has four main subunits: a, b, b' and c.

It is found in the plastid. Its subcellular location is the chloroplast thylakoid membrane. Key component of the proton channel; it plays a direct role in the translocation of protons across the membrane. This chain is ATP synthase subunit a, chloroplastic, found in Chara vulgaris (Common stonewort).